Reading from the N-terminus, the 1165-residue chain is Chromosome partition protein Smc (1165 aa).

32-39 (PNGSGKSN) is a binding site for ATP. A coiled-coil region spans residues 161-503 (AGVAEFDRKI…ETQRQVWREA (343 aa)). The region spanning 518–630 (QGVHGLISQL…VFRSLELARR (113 aa)) is the SMC hinge domain. Coiled-coil stretches lie at residues 672-901 (ELAE…LQQR) and 946-1010 (DLSL…DCDT).

Belongs to the SMC family. As to quaternary structure, homodimer.

It localises to the cytoplasm. In terms of biological role, required for chromosome condensation and partitioning. The protein is Chromosome partition protein Smc of Gloeobacter violaceus (strain ATCC 29082 / PCC 7421).